The chain runs to 202 residues: Orotate phosphoribosyltransferase (202 aa).

Residue 113-121 (EDIITTGGS) participates in 5-phospho-alpha-D-ribose 1-diphosphate binding. Orotate is bound by residues Thr-117 and Arg-145.

Belongs to the purine/pyrimidine phosphoribosyltransferase family. PyrE subfamily. In terms of assembly, homodimer. Mg(2+) is required as a cofactor.

It catalyses the reaction orotidine 5'-phosphate + diphosphate = orotate + 5-phospho-alpha-D-ribose 1-diphosphate. It functions in the pathway pyrimidine metabolism; UMP biosynthesis via de novo pathway; UMP from orotate: step 1/2. Its function is as follows. Catalyzes the transfer of a ribosyl phosphate group from 5-phosphoribose 1-diphosphate to orotate, leading to the formation of orotidine monophosphate (OMP). In Sulfurimonas denitrificans (strain ATCC 33889 / DSM 1251) (Thiomicrospira denitrificans (strain ATCC 33889 / DSM 1251)), this protein is Orotate phosphoribosyltransferase.